The chain runs to 78 residues: Serine rich endogenous peptide 12 (78 aa).

A signal peptide spans Met-1–Cys-24. Residues Arg-25–Arg-43 constitute a propeptide, removed in mature form. Residues Ser-47–Tyr-78 form a disordered region. An SCOOP motif motif is present at residues Ser-50–Arg-64. The SxS motif essential for MIK2 binding signature appears at Ser-56–Ser-58.

The protein belongs to the serine rich endogenous peptide (SCOOP) phytocytokine family. As to quaternary structure, interacts with MIK2 (via extracellular leucine-rich repeat domain); this interaction triggers the formation of complex between MIK2 and the BAK1/SERK3 and SERK4 coreceptors, and subsequent BAK1 activation by phosphorylation on 'Ser-612'. Mostly expressed in the whole root system, and, to a lower extent, in seedlings shoots.

The protein localises to the cell membrane. The protein resides in the secreted. Its subcellular location is the extracellular space. It localises to the apoplast. In terms of biological role, brassicaceae-specific phytocytokine (plant endogenous peptide released into the apoplast) perceived by MIK2 in a BAK1/SERK3 and SERK4 coreceptors-dependent manner, that modulates various physiological and antimicrobial processes including root growth prevention, phospholipid signaling pathway activation (e.g. accumulation of phosphatidic acid (PA), but transient reduction of phosphatidylinositol 4,5-bisphosphate (PIP(2)) levels) and reactive oxygen species (ROS) response regulation. Moderates primary root growth, and regulates root meristems and cell elongation; this root growth regulation is associated with the modulation of ROS metabolism and alteration of cell wall structure, and depends on variations in many genes expression. Promotes ROS (e.g. superoxide anion O(2) and hydrogen peroxide H(2)O(2)) production and MAPK (e.g. MPK3, MPK4 and MPK6) activation in a MIK2-dependent manner, thus leading to the up-regulation of immune-related marker genes (e.g. WRKY30, WRKY33 and CYP81F2). Involved in biotic and oxidative stress responses; acts as a negative regulator of defense against necrotrophic pathogens such as the bacteria Erwinia amylovora and the fungus Alternaria brassicicola. Able to prime defense responses against the pathogenic bacteria Pseudomonas syringae pv. tomato DC3000. Contributes to the triggering of defense responses toward generalist herbivores such as Spodoptera littoralis, probably via the activation of jasmonate and indole glucosinolate biosynthesis. Triggers the expression of several PROSCOOP genes (e.g. PROSCOOP3, PROSCOOP7, PROSCOOP12 and PROSCOOP13). This chain is Serine rich endogenous peptide 12, found in Arabidopsis thaliana (Mouse-ear cress).